The chain runs to 85 residues: Small ribosomal subunit protein bS16c (85 aa).

This sequence belongs to the bacterial ribosomal protein bS16 family.

Its subcellular location is the plastid. The protein localises to the chloroplast. This Oryza nivara (Indian wild rice) protein is Small ribosomal subunit protein bS16c.